We begin with the raw amino-acid sequence, 1025 residues long: Fanconi-associated nuclease 1 (1025 aa).

The UBZ4-type zinc finger occupies 40–68 (KLACPICSKMVPRYDLNWHLDEKCANNDN). C43, C46, H58, and C63 together coordinate Zn(2+). Residues 98-120 (TPGKLSPSKASLTPDPSDSAKMG) are disordered. S182 is modified (phosphoserine). Positions 682 to 704 (VEILQRLHMYEEAVKELESLLSQ) form a coiled coil. Mn(2+) contacts are provided by E842, D968, E983, and V984. Positions 903 to 1015 (AESLRAWVAA…GADVEVCHVV (113 aa)) constitute a VRR-NUC domain.

It belongs to the FAN1 family. As to quaternary structure, interacts with FANCD2 (when monoubiquitinated). Interacts with FANCI, MLH1, MLH3 and PMS2. Mn(2+) serves as cofactor. Requires Mg(2+) as cofactor. In terms of processing, ubiquitinated and degraded during mitotic exit by the APC/C-Cdh1 complex.

The protein resides in the nucleus. The enzyme catalyses Hydrolytically removes 5'-nucleotides successively from the 3'-hydroxy termini of 3'-hydroxy-terminated oligonucleotides.. Its function is as follows. Nuclease required for the repair of DNA interstrand cross-links (ICL) recruited at sites of DNA damage by monoubiquitinated FANCD2. Specifically involved in repair of ICL-induced DNA breaks by being required for efficient homologous recombination, probably in the resolution of homologous recombination intermediates. Not involved in DNA double-strand breaks resection. Acts as a 5'-3' exonuclease that anchors at a cut end of DNA and cleaves DNA successively at every third nucleotide, allowing to excise an ICL from one strand through flanking incisions. Probably keeps excising with 3'-flap annealing until it reaches and unhooks the ICL. Acts at sites that have a 5'-terminal phosphate anchor at a nick or a 1- or 2-nucleotide flap and is augmented by a 3' flap. Also has endonuclease activity toward 5'-flaps. This Ailuropoda melanoleuca (Giant panda) protein is Fanconi-associated nuclease 1 (FAN1).